A 178-amino-acid chain; its full sequence is Peptide deformylase (178 aa).

Fe cation contacts are provided by cysteine 102 and histidine 144. Glutamate 145 is a catalytic residue. Histidine 148 lines the Fe cation pocket.

This sequence belongs to the polypeptide deformylase family. The cofactor is Fe(2+).

It catalyses the reaction N-terminal N-formyl-L-methionyl-[peptide] + H2O = N-terminal L-methionyl-[peptide] + formate. In terms of biological role, removes the formyl group from the N-terminal Met of newly synthesized proteins. Requires at least a dipeptide for an efficient rate of reaction. N-terminal L-methionine is a prerequisite for activity but the enzyme has broad specificity at other positions. This Leptospira interrogans serogroup Icterohaemorrhagiae serovar copenhageni (strain Fiocruz L1-130) protein is Peptide deformylase.